Reading from the N-terminus, the 190-residue chain is MNFLLSWVHWSLALLLYLHHAKWSQAAPMAEGGQKPHEVVKFMDVYQRSFCRPIETLVDIFQEYPDEIEFIFKPSCVPLMRCGGCCNDESLECVPTEEFNITMQIMRIKPHQSQHIGEMSFLQHNKCECRPKKDKARQENPCGPCSERRKHLFVQDPQTCKCSCKNTDSRCKARQLELNERTCRCDKPRR.

The first 26 residues, Met1–Ala26, serve as a signal peptide directing secretion. 3 disulfide bridges follow: Cys51/Cys93, Cys82/Cys127, and Cys86/Cys129. Asn100 is a glycosylation site (N-linked (GlcNAc...) asparagine).

It belongs to the PDGF/VEGF growth factor family. In terms of assembly, homodimer; disulfide-linked. Also found as heterodimer with PGF. Interacts with NRP1. Interacts with BSG. Interacts with CD82; this interaction inhibits VEGFA-mediated signaling pathway.

The protein localises to the secreted. Its function is as follows. Growth factor active in angiogenesis, vasculogenesis and endothelial cell growth. Induces endothelial cell proliferation, promotes cell migration, inhibits apoptosis and induces permeabilization of blood vessels. Binds to the FLT1/VEGFR1 and KDR/VEGFR2 receptors, heparan sulfate and heparin. Binding to NRP1 receptor initiates a signaling pathway needed for motor neuron axon guidance and cell body migration, including for the caudal migration of facial motor neurons from rhombomere 4 to rhombomere 6 during embryonic development. Also binds the DEAR/FBXW7-AS1 receptor. The protein is Vascular endothelial growth factor A (VEGFA) of Bos taurus (Bovine).